The chain runs to 540 residues: uncharacterized protein (540 aa).

The N-terminal stretch at 1–20 is a signal peptide; that stretch reads MSVSYRGPRWSSFVHVSQHS.

This sequence belongs to the TP096X family.

This is an uncharacterized protein from Treponema pallidum (strain Nichols).